The primary structure comprises 860 residues: Leucine--tRNA ligase (860 aa).

The short motif at 42 to 52 (PYPSGRLHMGH) is the 'HIGH' region element. The short motif at 619-623 (KMSKS) is the 'KMSKS' region element. Lys-622 serves as a coordination point for ATP.

It belongs to the class-I aminoacyl-tRNA synthetase family.

It is found in the cytoplasm. It catalyses the reaction tRNA(Leu) + L-leucine + ATP = L-leucyl-tRNA(Leu) + AMP + diphosphate. The chain is Leucine--tRNA ligase from Edwardsiella ictaluri (strain 93-146).